The primary structure comprises 1029 residues: Endosome/lysosome-associated apoptosis and autophagy regulator family member 2 (1029 aa).

The signal sequence occupies residues 1–47 (MLFRARGPVRGRGWGRPAEAPRRGRSPPWSPAWICCWALAGCQAAWA). Residues 48 to 929 (GDLPSSSSRP…TCETVDFWLK (882 aa)) are Extracellular-facing. A glycan (N-linked (GlcNAc...) asparagine) is linked at Asn-169. Intrachain disulfides connect Cys-293/Cys-310, Cys-323/Cys-346, and Cys-326/Cys-358. N-linked (GlcNAc...) asparagine glycosylation is found at Asn-405 and Asn-691. The MRH domain occupies 672–877 (SDCFFYHEKE…LWESAEACPL (206 aa)). Disulfide bonds link Cys-674–Cys-720, Cys-730–Cys-758, Cys-827–Cys-863, and Cys-839–Cys-875. A helical membrane pass occupies residues 930–950 (VGAGVGAFTAVLLVALTCYFW). Over 951–1029 (KKNQKLEYKY…QLKTSRSPNI (79 aa)) the chain is Cytoplasmic. Ser-1018 carries the post-translational modification Phosphoserine.

The protein belongs to the ELAPOR family.

The protein resides in the cell membrane. Functionally, functions as a regulator of the BMP signaling pathway and may be involved in epidermal differentiation. The polypeptide is Endosome/lysosome-associated apoptosis and autophagy regulator family member 2 (Homo sapiens (Human)).